Here is a 139-residue protein sequence, read N- to C-terminus: Ribosome maturation factor RimP (139 aa).

It belongs to the RimP family.

It localises to the cytoplasm. In terms of biological role, required for maturation of 30S ribosomal subunits. This Syntrophomonas wolfei subsp. wolfei (strain DSM 2245B / Goettingen) protein is Ribosome maturation factor RimP.